We begin with the raw amino-acid sequence, 967 residues long: Isoleucine--tRNA ligase 2 (967 aa).

A 'HIGH' region motif is present at residues 58 to 68; that stretch reads PYANGDIHIGH. The span at 437–446 shows a compositional bias: low complexity; it reads AVTEEAGATG. A disordered region spans residues 437–466; the sequence is AVTEEAGATGEARKVGKAEEAEEAGPAKTL. Glu-598 contributes to the L-isoleucyl-5'-AMP binding site. The short motif at 639–643 is the 'KMSKS' region element; the sequence is KMSKS. An ATP-binding site is contributed by Lys-642. Residues Cys-922, Cys-925, Cys-942, and Cys-945 each contribute to the Zn(2+) site.

Belongs to the class-I aminoacyl-tRNA synthetase family. IleS type 1 subfamily. Monomer. The cofactor is Zn(2+).

It localises to the cytoplasm. The enzyme catalyses tRNA(Ile) + L-isoleucine + ATP = L-isoleucyl-tRNA(Ile) + AMP + diphosphate. Catalyzes the attachment of isoleucine to tRNA(Ile). As IleRS can inadvertently accommodate and process structurally similar amino acids such as valine, to avoid such errors it has two additional distinct tRNA(Ile)-dependent editing activities. One activity is designated as 'pretransfer' editing and involves the hydrolysis of activated Val-AMP. The other activity is designated 'posttransfer' editing and involves deacylation of mischarged Val-tRNA(Ile). This chain is Isoleucine--tRNA ligase 2, found in Burkholderia mallei (strain ATCC 23344).